A 185-amino-acid polypeptide reads, in one-letter code: MIDEIRKDAETRMKKSIEAFRAELRKIRTGRAHTNLLDHISVTYYGTEVPLNQAASVKVEDARTLSVIPFEKSMVPEVEKAIQSSDLGLTPTTAGTVIRIPMPPLTEDRRKELVKVVRSEAEQARVAIRNIRRDANSDLKELLKEKEISEDEERGGEDAIQKLTDKYTGEVDRILQEKEKELMEI.

It belongs to the RRF family.

Its subcellular location is the cytoplasm. Functionally, responsible for the release of ribosomes from messenger RNA at the termination of protein biosynthesis. May increase the efficiency of translation by recycling ribosomes from one round of translation to another. The chain is Ribosome-recycling factor from Alkalilimnicola ehrlichii (strain ATCC BAA-1101 / DSM 17681 / MLHE-1).